The primary structure comprises 40 residues: uncharacterized protein (40 aa).

Polar residues predominate over residues 1–14; the sequence is MNRMLSLSVQSQRA. Positions 1–25 are disordered; that stretch reads MNRMLSLSVQSQRAPASPSPYGLKI.

This is an uncharacterized protein from Treponema pallidum (strain Nichols).